Reading from the N-terminus, the 312-residue chain is Olfactory receptor 51B2 (312 aa).

At 1-23 the chain is on the extracellular side; it reads MWPNITAAPFLLTGFPGLEAAHH. The N-linked (GlcNAc...) asparagine glycan is linked to Asn4. A helical membrane pass occupies residues 24-44; that stretch reads WISIPFFAVYVCILLGNGMLL. The Cytoplasmic segment spans residues 45-52; it reads YLIKHDHS. Residues 53–73 form a helical membrane-spanning segment; sequence LHEPMYYFLTMLAGTDLMVTL. At 74-97 the chain is on the extracellular side; it reads TTMPTVMGILWVNHREISSVGCFL. An intrachain disulfide couples Cys95 to Cys187. Residues 98 to 118 traverse the membrane as a helical segment; it reads QAYFIHSLSVVESGSLLAMAY. Over 119 to 137 the chain is Cytoplasmic; the sequence is DCFIAIRNPLRYASILTNT. A helical membrane pass occupies residues 138–158; sequence RVIALGVGVFLRGFVSILPVI. The Extracellular portion of the chain corresponds to 159–194; it reads LRLFSFSYCKSHVITRAFCLHQEIMRLACADITFNR. A helical transmembrane segment spans residues 195-215; the sequence is LYPVILISLTIFLDCLIILFS. At 216–235 the chain is on the cytoplasmic side; the sequence is YILILNTVIGIASGEERAKA. Residues 236 to 256 traverse the membrane as a helical segment; that stretch reads LNTCISHISCVLIFYVTVMGL. Residues 257–271 lie on the Extracellular side of the membrane; it reads TFIYRFGKNVPEVVH. A helical transmembrane segment spans residues 272–292; sequence IIMSYIYFLFPPLMNPVIYSI. The Cytoplasmic portion of the chain corresponds to 293–312; sequence KTKQIQYGIIRLLSKHRFSS.

The protein belongs to the G-protein coupled receptor 1 family. Post-translationally, ubiquitinated by the CRL2(FEM1A) and CRL2(FEM1C) complexes, which recognize the -Lys-Xaa-Xaa-Arg C-degron at the C-terminus, leading to its degradation.

It localises to the cell membrane. Its function is as follows. Odorant receptor. The sequence is that of Olfactory receptor 51B2 (OR51B2) from Homo sapiens (Human).